The primary structure comprises 166 residues: Cofilin-1 (166 aa).

N-acetylalanine is present on Ala-2. Ser-3 and Ser-8 each carry phosphoserine. The ADF-H domain occupies 4–153 (GVAVSDGVIK…KDRCTLAEKL (150 aa)). The residue at position 13 (Lys-13) is an N6-acetyllysine. Thr-25 carries the phosphothreonine modification. A Nuclear localization signal motif is present at residues 30–34 (KKRKK). Ser-41 is modified (phosphoserine). Tyr-68 is subject to Phosphotyrosine. N6-acetyllysine is present on Lys-73. Lys-132 is covalently cross-linked (Glycyl lysine isopeptide (Lys-Gly) (interchain with G-Cter in SUMO2)). Tyr-140 carries the phosphotyrosine modification. Residue Lys-144 is modified to N6-acetyllysine. A Phosphoserine modification is found at Ser-156.

This sequence belongs to the actin-binding proteins ADF family. In terms of assembly, can bind G- and F-actin in a 1:1 ratio of cofilin to actin. It is a major component of intranuclear and cytoplasmic actin rods. Interacts with the subcortical maternal complex (SCMC) via interaction with TLE6 and NLRP5. Interacts with C9orf72. In terms of processing, inactivated by phosphorylation on Ser-3. Phosphorylated on Ser-3 in resting cells. Dephosphorylated by PDXP/chronophin; this restores its activity in promoting actin filament depolymerization. The phosphorylation of Ser-24 may prevent recognition of the nuclear localization signal. Phosphorylated via a ARRB1-RAC1-LIMK1-PAK1 cascade upon active ligand stimulation of atypical chemokine receptor ACKR2.

Its subcellular location is the nucleus matrix. The protein resides in the cytoplasm. It localises to the cytoskeleton. It is found in the cell projection. The protein localises to the ruffle membrane. Its subcellular location is the lamellipodium membrane. The protein resides in the lamellipodium. It localises to the growth cone. It is found in the axon. Its function is as follows. Binds to F-actin and exhibits pH-sensitive F-actin depolymerizing activity. Important for normal progress through mitosis and normal cytokinesis. In conjunction with the subcortical maternal complex (SCMC), plays an essential role for zygotes to progress beyond the first embryonic cell divisions via regulation of actin dynamics. Required for the centralization of the mitotic spindle and symmetric division of zygotes. Plays a role in the regulation of cell morphology and cytoskeletal organization in epithelial cells. Required for the up-regulation of atypical chemokine receptor ACKR2 from endosomal compartment to cell membrane, increasing its efficiency in chemokine uptake and degradation. Required for neural tube morphogenesis and neural crest cell migration. This is Cofilin-1 (Cfl1) from Rattus norvegicus (Rat).